Consider the following 228-residue polypeptide: Small ribosomal subunit protein uS2 (228 aa).

It belongs to the universal ribosomal protein uS2 family.

This chain is Small ribosomal subunit protein uS2, found in Buchnera aphidicola subsp. Baizongia pistaciae (strain Bp).